A 154-amino-acid chain; its full sequence is 6,7-dimethyl-8-ribityllumazine synthase (154 aa).

Residues Trp-22, 56 to 58, and 80 to 82 each bind 5-amino-6-(D-ribitylamino)uracil; these read AWE and CVI. 85-86 contacts (2S)-2-hydroxy-3-oxobutyl phosphate; that stretch reads DT. Catalysis depends on His-88, which acts as the Proton donor. Residue Asn-113 coordinates 5-amino-6-(D-ribitylamino)uracil. A (2S)-2-hydroxy-3-oxobutyl phosphate-binding site is contributed by Arg-127.

The protein belongs to the DMRL synthase family. As to quaternary structure, forms an icosahedral capsid composed of 60 subunits, arranged as a dodecamer of pentamers.

It carries out the reaction (2S)-2-hydroxy-3-oxobutyl phosphate + 5-amino-6-(D-ribitylamino)uracil = 6,7-dimethyl-8-(1-D-ribityl)lumazine + phosphate + 2 H2O + H(+). It participates in cofactor biosynthesis; riboflavin biosynthesis; riboflavin from 2-hydroxy-3-oxobutyl phosphate and 5-amino-6-(D-ribitylamino)uracil: step 1/2. Its function is as follows. Catalyzes the formation of 6,7-dimethyl-8-ribityllumazine by condensation of 5-amino-6-(D-ribitylamino)uracil with 3,4-dihydroxy-2-butanone 4-phosphate. This is the penultimate step in the biosynthesis of riboflavin. In Xanthomonas axonopodis pv. citri (strain 306), this protein is 6,7-dimethyl-8-ribityllumazine synthase.